Here is a 449-residue protein sequence, read N- to C-terminus: tRNA modification GTPase MnmE (449 aa).

3 residues coordinate (6S)-5-formyl-5,6,7,8-tetrahydrofolate: Arg24, Glu85, and Arg124. One can recognise a TrmE-type G domain in the interval 220–369 (GIRTAIAGPP…LEEAIIQAFS (150 aa)). K(+) is bound at residue Asn230. GTP is bound by residues 230 to 235 (NVGKSS), 249 to 255 (SNIAGTT), and 274 to 277 (DTAG). Ser234 serves as a coordination point for Mg(2+). The K(+) site is built by Ser249, Ile251, and Thr254. Thr255 is a Mg(2+) binding site. Lys449 provides a ligand contact to (6S)-5-formyl-5,6,7,8-tetrahydrofolate.

This sequence belongs to the TRAFAC class TrmE-Era-EngA-EngB-Septin-like GTPase superfamily. TrmE GTPase family. In terms of assembly, homodimer. Heterotetramer of two MnmE and two MnmG subunits. It depends on K(+) as a cofactor.

Its subcellular location is the cytoplasm. Exhibits a very high intrinsic GTPase hydrolysis rate. Involved in the addition of a carboxymethylaminomethyl (cmnm) group at the wobble position (U34) of certain tRNAs, forming tRNA-cmnm(5)s(2)U34. In Akkermansia muciniphila (strain ATCC BAA-835 / DSM 22959 / JCM 33894 / BCRC 81048 / CCUG 64013 / CIP 107961 / Muc), this protein is tRNA modification GTPase MnmE.